Consider the following 77-residue polypeptide: Acyl carrier protein (77 aa).

Residues 2–77 (STIEERVKKV…EAIDYVVAHQ (76 aa)) enclose the Carrier domain. S37 is subject to O-(pantetheine 4'-phosphoryl)serine.

The protein belongs to the acyl carrier protein (ACP) family. In terms of processing, 4'-phosphopantetheine is transferred from CoA to a specific serine of apo-ACP by AcpS. This modification is essential for activity because fatty acids are bound in thioester linkage to the sulfhydryl of the prosthetic group.

It is found in the cytoplasm. The protein operates within lipid metabolism; fatty acid biosynthesis. In terms of biological role, carrier of the growing fatty acid chain in fatty acid biosynthesis. The chain is Acyl carrier protein from Chromohalobacter salexigens (strain ATCC BAA-138 / DSM 3043 / CIP 106854 / NCIMB 13768 / 1H11).